The chain runs to 180 residues: tRNA-splicing endonuclease (180 aa).

Residues tyrosine 117, histidine 125, and lysine 156 contribute to the active site.

It belongs to the tRNA-intron endonuclease family. Archaeal short subfamily. As to quaternary structure, homotetramer; although the tetramer contains four active sites, only two participate in the cleavage. Therefore, it should be considered as a dimer of dimers.

The catalysed reaction is pretRNA = a 3'-half-tRNA molecule with a 5'-OH end + a 5'-half-tRNA molecule with a 2',3'-cyclic phosphate end + an intron with a 2',3'-cyclic phosphate and a 5'-hydroxyl terminus.. Functionally, endonuclease that removes tRNA introns. Cleaves pre-tRNA at the 5'- and 3'-splice sites to release the intron. The products are an intron and two tRNA half-molecules bearing 2',3' cyclic phosphate and 5'-OH termini. Recognizes a pseudosymmetric substrate in which 2 bulged loops of 3 bases are separated by a stem of 4 bp. The chain is tRNA-splicing endonuclease from Sulfurisphaera tokodaii (strain DSM 16993 / JCM 10545 / NBRC 100140 / 7) (Sulfolobus tokodaii).